Here is a 510-residue protein sequence, read N- to C-terminus: GPI mannosyltransferase 4 (510 aa).

Transmembrane regions (helical) follow at residues Leu-7–His-27, Phe-62–Gly-82, and Ala-89–Leu-109. Asn-142 is a glycosylation site (N-linked (GlcNAc...) asparagine). Residues Leu-179–Val-199 form a helical membrane-spanning segment. N-linked (GlcNAc...) asparagine glycosylation is present at Asn-212. The next 3 membrane-spanning stretches (helical) occupy residues Ile-213–Val-233, Leu-268–Thr-288, and Phe-339–Gly-359.

This sequence belongs to the glycosyltransferase 22 family. PIGZ subfamily.

The protein resides in the endoplasmic reticulum membrane. It functions in the pathway glycolipid biosynthesis; glycosylphosphatidylinositol-anchor biosynthesis. Functionally, alpha-1,2-mannosyltransferase involved in glycosylphosphatidylinositol-anchor biosynthesis. Transfers a fourth mannose to trimannosyl-GPIs during GPI precursor assembly. The presence of a fourth mannose in GPI is essential in fungi. The protein is GPI mannosyltransferase 4 (SMP3) of Yarrowia lipolytica (strain CLIB 122 / E 150) (Yeast).